We begin with the raw amino-acid sequence, 738 residues long: MAADSREEKDGELNVLDDILTEVPEQDDELYNPESEQDKNEKKGSKRKSERMESIDTKRQKPSIHSRQLISKPLSSSVSNNKRIVSTKGKSVTEYKNEEYQRSERNKRLDADRKIRLSSSSSREPYKSQPEKPCLRKRDSERRAKSPTPDGSERIGLEVDRRASRSSQSSKEEGNSEEYGSDHETGSSASSEQGNNTENEEEGGEEDVEEDEEVDEDGDDDEEVDEDAEEEEDEEEDEEEEDEEEEEEEEEEYEQDERDQKEEGNDYDTRSEASDSGSESVSFTDGSVRSGSGTDGSDEKKKERKRARGISPIVFDRSGSSASESYAGSEKKHEKLSSSVRAVRKDQTSKLKYVLQDARFFLIKSNNHENVSLAKAKGVWSTLPVNEKKLNLAFRSARSVILIFSVRESGKFQGFARLSSESHHGGSPIHWVLPAGMSAKMLGGVFKIDWICRRELPFTKSAHLTNPWNEHKPVKIGRDGQEIELECGTQLCLLFPPDESIDLYQLIHKMRHKRRMHSQPRSRGRPSRREPVRDVGRRRPEDYDIHNSRKKPRIDYPPEFHQRPGYLKDPRYQEVDSFTNLIPNRRFSGVRRDVFLNGSYNDYVREFHNMGPPPPWQGMPPYPGIEQPPHHPYYQHHAPPPQAHPPYSGHHPVPHEARYRDKRVHDYDMRVDDFLRRTQAVVSGRRSRPRERDRERERDRPRDNRRDRERDRGRDRERERERICDRDRDRGERGRYRR.

Residues 1 to 12 are compositionally biased toward basic and acidic residues; that stretch reads MAADSREEKDGE. The tract at residues 1–341 is disordered; the sequence is MAADSREEKD…KHEKLSSSVR (341 aa). Residue Ser35 is modified to Phosphoserine. Residues 50–59 are compositionally biased toward basic and acidic residues; it reads ERMESIDTKR. Polar residues predominate over residues 63 to 90; that stretch reads SIHSRQLISKPLSSSVSNNKRIVSTKGK. A compositionally biased stretch (basic and acidic residues) spans 91–115; it reads SVTEYKNEEYQRSERNKRLDADRKI. A Glycyl lysine isopeptide (Lys-Gly) (interchain with G-Cter in SUMO2) cross-link involves residue Lys96. A phosphoserine mark is found at Ser118 and Ser120. The segment covering 124 to 144 has biased composition (basic and acidic residues); the sequence is EPYKSQPEKPCLRKRDSERRA. Ser146 is modified (phosphoserine). Thr148 is modified (phosphothreonine). Basic and acidic residues-rich tracts occupy residues 151–163 and 170–185; these read GSER…DRRA and SKEE…DHET. Residues 186–197 show a composition bias toward polar residues; that stretch reads GSSASSEQGNNT. Positions 198 to 257 are enriched in acidic residues; the sequence is ENEEEGGEEDVEEDEEVDEDGDDDEEVDEDAEEEEDEEEDEEEEDEEEEEEEEEEYEQDE. Residues 258–273 show a composition bias toward basic and acidic residues; sequence RDQKEEGNDYDTRSEA. Positions 283–292 are enriched in polar residues; the sequence is FTDGSVRSGS. Residues Ser311, Ser318, Ser320, Ser321, and Ser323 each carry the phosphoserine modification. A compositionally biased stretch (low complexity) spans 318 to 328; that stretch reads SGSSASESYAG. Residues 358–495 enclose the YTH domain; sequence ARFFLIKSNN…ECGTQLCLLF (138 aa). RNA-binding positions include 364–366 and Trp380; that span reads KSN. A Phosphoserine modification is found at Ser427. Trp431 is an RNA binding site. Phosphoserine is present on Ser438. Residue Asp479 participates in RNA binding. Over residues 512–526 the composition is skewed to basic residues; that stretch reads HKRRMHSQPRSRGRP. Disordered regions lie at residues 512 to 566, 618 to 654, and 680 to 738; these read HKRR…RPGY, GMPP…HPVP, and AVVS…RYRR. Positions 527–566 are enriched in basic and acidic residues; that stretch reads SRREPVRDVGRRRPEDYDIHNSRKKPRIDYPPEFHQRPGY. Ser548 carries the post-translational modification Phosphoserine. Basic and acidic residues predominate over residues 690–738; the sequence is RERDRERERDRPRDNRRDRERDRGRDRERERERICDRDRDRGERGRYRR.

In terms of assembly, interacts with SRSF1. Interacts with SRSF2. Interacts with SRSF3. Interacts with SRSF7. Interacts with SRSF10. Interacts with CPSF6. Interacts with KHDRBS1/SAM68. Interacts with TRA2B. Interacts with KHDRBS3. Interacts with EMD. Interacts with RBMX. Interacts with ZCCHC8. Post-translationally, tyrosine phosphorylated. As to expression, ubiquitous.

Its subcellular location is the nucleus. The protein resides in the nucleus speckle. Regulator of alternative splicing that specifically recognizes and binds N6-methyladenosine (m6A)-containing RNAs. M6A is a modification present at internal sites of mRNAs and some non-coding RNAs and plays a role in the efficiency of mRNA splicing, processing and stability. Acts as a key regulator of exon-inclusion or exon-skipping during alternative splicing via interaction with mRNA splicing factors SRSF3 and SRSF10. Specifically binds m6A-containing mRNAs and promotes recruitment of SRSF3 to its mRNA-binding elements adjacent to m6A sites, leading to exon-inclusion during alternative splicing. In contrast, interaction with SRSF3 prevents interaction with SRSF10, a splicing factor that promotes exon skipping: this prevents SRSF10 from binding to its mRNA-binding sites close to m6A-containing regions, leading to inhibit exon skipping during alternative splicing. May also regulate alternative splice site selection. Also involved in nuclear export of m6A-containing mRNAs via interaction with SRSF3: interaction with SRSF3 facilitates m6A-containing mRNA-binding to both SRSF3 and NXF1, promoting mRNA nuclear export. Involved in S-adenosyl-L-methionine homeostasis by regulating expression of MAT2A transcripts, probably by binding m6A-containing MAT2A mRNAs. Also recognizes and binds m6A on other RNA molecules. Involved in random X inactivation mediated by Xist RNA: recognizes and binds m6A-containing Xist and promotes transcription repression activity of Xist. Also recognizes and binds m6A-containing single-stranded DNA. Involved in germline development: required for spermatogonial development in males and oocyte growth and maturation in females, probably via its role in alternative splicing. The protein is YTH domain-containing protein 1 (Ythdc1) of Rattus norvegicus (Rat).